We begin with the raw amino-acid sequence, 291 residues long: Lactoylglutathione lyase (291 aa).

VOC domains follow at residues 24–149 (RLLH…LIQR) and 155–283 (PLCQ…LVDN). 3 residues coordinate substrate: arginine 31, asparagine 82, and histidine 96. Residue histidine 96 is part of the active site. Residue glutamate 145 is the Proton donor/acceptor of the active site. Glutamate 145 contributes to the Ni(2+) binding site. Active-site residues include glutamine 158 and glutamate 209. Residue glutamate 209 coordinates Ni(2+).

It belongs to the glyoxalase I family. In terms of assembly, monomer. Ni(2+) serves as cofactor. Phosphorylated after gibberellin treatment. In terms of tissue distribution, expressed in callus, stem, leaves, panicles and maturing seeds (at protein level).

The enzyme catalyses (R)-S-lactoylglutathione = methylglyoxal + glutathione. It functions in the pathway secondary metabolite metabolism; methylglyoxal degradation; (R)-lactate from methylglyoxal: step 1/2. Its function is as follows. Catalyzes the conversion of hemimercaptal, formed from methylglyoxal and glutathione, to S-lactoylglutathione. Involved in the detoxifiation of methylglyoxal. Can functionally complement growth defect of a yeast mutant lacking GLY I. Involved in abiotic stress response. Over-expression of GLYI-11 in tobacco increases tolerance to osmotic, oxidative and salt stresses. This is Lactoylglutathione lyase from Oryza sativa subsp. japonica (Rice).